Reading from the N-terminus, the 48-residue chain is uncharacterized protein (48 aa).

A helical membrane pass occupies residues 20–37 (ILASPLFFANYVLHAAIH).

It localises to the membrane. This is an uncharacterized protein from Saccharomyces cerevisiae (strain ATCC 204508 / S288c) (Baker's yeast).